The sequence spans 335 residues: Serpentine receptor class alpha-25 (335 aa).

A run of 5 helical transmembrane segments spans residues 22 to 42 (IPVKISFLIIATVIFLSFYFA), 151 to 171 (LLIIQCLLSFGTYYVGLYGVP), 195 to 215 (FRTVVMVFCIIVIIFVYYLSV), 245 to 265 (CILIVLQFACILMSSYGVNYI), and 280 to 300 (LAPFFAGVTYASLCLPLVIYF).

This sequence belongs to the nematode receptor-like protein sra family.

It is found in the membrane. This chain is Serpentine receptor class alpha-25 (sra-25), found in Caenorhabditis elegans.